The chain runs to 404 residues: AT-hook motif nuclear-localized protein 3 (404 aa).

3 disordered regions span residues 1–51 (MEER…VPPT), 70–100 (PFSL…PDGT), and 113–133 (SVPL…GKSN). The segment covering 7–19 (TNINNNITSSFGL) has biased composition (polar residues). The span at 35-51 (DPPPRPENPNPFLVPPT) shows a compositional bias: pro residues. A compositionally biased stretch (polar residues) spans 71–83 (FSLTMPTENTSAE). The Bipartite nuclear localization signal motif lies at 86 to 94 (KKKRGRPRK). Positions 86 to 98 (KKKRGRPRKYNPD) form a DNA-binding region, a.T hook. The segment covering 123–133 (RKRGRGRGKSN) has biased composition (basic residues). The 146-residue stretch at 163-308 (GANFTPHVLI…RFGAQPSSIS (146 aa)) folds into the PPC domain. The tract at residues 359–404 (PFSSIPVGGGGGGEVGEEEGEEDDDELEGEDEEFGGDSQSDNEIPS) is disordered. Residues 373–393 (VGEEEGEEDDDELEGEDEEFG) are compositionally biased toward acidic residues.

Homodimer. Interacts with AHL4. As to expression, expressed in both procambium and xylem precursors of the root meristem. Also detected in the endodermis in the late elongation zone and onwards.

The protein resides in the nucleus. In terms of biological role, transcription factor that specifically binds AT-rich DNA sequences related to the nuclear matrix attachment regions (MARs). Acts redundantly with AHL4 to regulate the formation of tissue boundary between the xylem and procambium in the root meristem. The polypeptide is AT-hook motif nuclear-localized protein 3 (Arabidopsis thaliana (Mouse-ear cress)).